The sequence spans 1492 residues: ATP-binding cassette sub-family C member 10 (1492 aa).

9 helical membrane-spanning segments follow: residues Leu32–Thr52, Leu70–Pro90, Val102–Leu122, Pro133–Trp153, Leu172–Pro192, Leu293–Leu313, Leu320–Leu340, Leu391–Thr411, and Leu414–Val434. The ABC transmembrane type-1 1 domain occupies Tyr285–Glu563. Phosphothreonine is present on Thr463. Ser467 bears the Phosphoserine mark. 2 helical membrane passes run Val507–Leu527 and Phe538–Ile558. The region spanning Leu598–Glu824 is the ABC transporter 1 domain. Gly633–Ser640 is a binding site for ATP. Positions Asn825–Glu860 are disordered. Positions Gly826–Pro840 are enriched in polar residues. Transmembrane regions (helical) follow at residues Ala875–Met895, Leu933–Leu953, Ile974–Leu994, Ala1051–Leu1071, Ile1153–Gln1173, and Gly1182–Val1202. Residues Ala885–Ala1210 enclose the ABC transmembrane type-1 2 domain. An ABC transporter 2 domain is found at Val1246–Gln1479. Gly1280–Ser1287 is an ATP binding site.

This sequence belongs to the ABC transporter superfamily. ABCC family. Conjugate transporter (TC 3.A.1.208) subfamily. As to expression, in testis, localized to peritubular myoid cells, Leydig cells, along the basal membrane of Sertoli cells, moderately in the adluminal compartment of the seminiferous tubules, and in vascular endothelial cells. Specifically expressed in spleen. In terms of tissue distribution, widely expressed.

It localises to the cell membrane. The protein localises to the basolateral cell membrane. It is found in the basal cell membrane. It catalyses the reaction ATP + H2O + xenobioticSide 1 = ADP + phosphate + xenobioticSide 2.. The enzyme catalyses an S-substituted glutathione(in) + ATP + H2O = an S-substituted glutathione(out) + ADP + phosphate + H(+). The catalysed reaction is 17beta-estradiol 17-O-(beta-D-glucuronate)(in) + ATP + H2O = 17beta-estradiol 17-O-(beta-D-glucuronate)(out) + ADP + phosphate + H(+). It carries out the reaction leukotriene C4(in) + ATP + H2O = leukotriene C4(out) + ADP + phosphate + H(+). Functionally, ATP-dependent transporter of the ATP-binding cassette (ABC) family that actively extrudes physiological compounds, and xenobiotics from cells. Lipophilic anion transporter that mediates ATP-dependent transport of glucuronide conjugates such as estradiol-17-beta-o-glucuronide and GSH conjugates such as leukotriene C4 (LTC4). May contribute to regulate the transport of organic compounds in testes across the blood-testis-barrier. Mediates multidrug resistance (MDR) in cancer cells by preventing the intracellular accumulation of certain antitumor drugs, such as, docetaxel and paclitaxel. Does not transport glycocholic acid, taurocholic acid, MTX, folic acid, cAMP, or cGMP. The chain is ATP-binding cassette sub-family C member 10 (ABCC10) from Homo sapiens (Human).